Here is a 1347-residue protein sequence, read N- to C-terminus: Protocadherin-11 X-linked (1347 aa).

The first 23 residues, 1–23 (MDLLSGTYIFAVLLACVVFHSGA), serve as a signal peptide directing secretion. Topologically, residues 24 to 812 (QEKNYTIREE…VSSPTSDYVK (789 aa)) are extracellular. 7 consecutive Cadherin domains span residues 26–139 (KNYT…APLF), 140–249 (PATV…HPVF), 250–355 (KETE…VPSI), 362–466 (NPVN…APVF), 467–570 (TQSF…SPVF), 571–673 (THNE…KPVF), and 677–795 (PSNC…APVT). Residues Asn27, Asn48, and Asn54 are each glycosylated (N-linked (GlcNAc...) asparagine). N-linked (GlcNAc...) asparagine glycosylation occurs at Asn344. Asn553 carries N-linked (GlcNAc...) asparagine glycosylation. Asn773 is a glycosylation site (N-linked (GlcNAc...) asparagine). The chain crosses the membrane as a helical span at residues 813–833 (ILVAAVAGTITVVVVIFITAV). Over 834–1347 (VRCRQAPHLK…DSPIMEEHPL (514 aa)) the chain is Cytoplasmic. 3 disordered regions span residues 1057–1091 (LPEGSQESSSDGGLGDHDAGSLTSTSHGLPLGYPQ), 1097–1116 (RATPSNRTEGDGNSDPESTF), and 1326–1347 (FTPRQQARPSRGDSPIMEEHPL).

In terms of tissue distribution, expressed strongly in fetal brain and brain (cortex, amygdala, thalamus, substantia nigra, hippocampus, caudate nucleus and corpus callosum). Expressed at low level in testis.

It localises to the cell membrane. In terms of biological role, potential calcium-dependent cell-adhesion protein. The protein is Protocadherin-11 X-linked (PCDH11X) of Homo sapiens (Human).